A 117-amino-acid polypeptide reads, in one-letter code: Large ribosomal subunit protein bL20 (117 aa).

It belongs to the bacterial ribosomal protein bL20 family.

Binds directly to 23S ribosomal RNA and is necessary for the in vitro assembly process of the 50S ribosomal subunit. It is not involved in the protein synthesizing functions of that subunit. The chain is Large ribosomal subunit protein bL20 from Brachyspira hyodysenteriae (strain ATCC 49526 / WA1).